The chain runs to 593 residues: ESX-1 secretion system protein EccCb1 (593 aa).

2 consecutive FtsK domains span residues 66–260 (RQEV…NETQ) and 350–546 (QVPL…EKND). ATP contacts are provided by residues 85–92 (GAPQTGKS) and 377–384 (GAPKSGKT).

In terms of assembly, part of the ESX-1 / type VII secretion system (T7SS), which is composed of cytosolic and membrane components. The ESX-1 membrane complex is composed of EccB1, EccCa1, EccCb1, EccD1 and EccE1.

The protein resides in the cytoplasm. In terms of biological role, part of the ESX-1 / type VII specialized secretion system (T7SS), which exports several proteins including EsxA and EsxB. Plays a role in DNA conjugation, in both donor and recipient strains. In Mycolicibacterium smegmatis (strain ATCC 700084 / mc(2)155) (Mycobacterium smegmatis), this protein is ESX-1 secretion system protein EccCb1.